The sequence spans 454 residues: 5-hydroxytryptamine receptor 3D (454 aa).

An N-terminal signal peptide occupies residues 1–24 (MQKHSPGPPALALLSQSLLTTGNG). Over 25–232 (DTLIINCPGF…IRRRCRPSPY (208 aa)) the chain is Extracellular. N-linked (GlcNAc...) asparagine glycosylation is present at asparagine 66. Residues 233 to 253 (VVNFLVPSGILIAIDALSFYL) form a helical membrane-spanning segment. Residues 254–264 (PLESGNCAPFK) lie on the Cytoplasmic side of the membrane. The chain crosses the membrane as a helical span at residues 265 to 285 (MTVLLGYSVFLLMMNDLLPAT). Over 286-306 (STSSHASLVAPLALMQTPLPA) the chain is Extracellular. The helical transmembrane segment at 307-327 (GVYFALCLSLMVGSLLETIFI) threads the bilayer. Over 328 to 431 (THLLHVATTQ…WVQFSHAMDA (104 aa)) the chain is Cytoplasmic. The disordered stretch occupies residues 363–410 (PQKGNKGPGLTPTHLPGVKEPEVSAGQMPGPGEAELTGGSEWTRAQRE). Residues 399–430 (TGGSEWTRAQREHEAQKQHSVELWVQFSHAMD) form an HA-stretch; determines single-channel conductance in 5-HT3 receptors region. Residues 432–452 (LLFRLYLLFMASSIITVICLW) form a helical membrane-spanning segment. Residues 453–454 (NT) are Extracellular-facing.

It belongs to the ligand-gated ion channel (TC 1.A.9) family. 5-hydroxytryptamine receptor (TC 1.A.9.2) subfamily. HTR3D sub-subfamily. Forms homopentameric as well as heteropentameric serotonin-activated cation-selective channel complexes with HTR3A. The homomeric complex is not functional. Heteropentameric complexes display properties which resemble that of neuronal serotonin-activated channels in vivo. Expressed in liver, as well as fetal and adult colon and kidney.

Its subcellular location is the postsynaptic cell membrane. The protein localises to the cell membrane. It carries out the reaction Na(+)(in) = Na(+)(out). The catalysed reaction is K(+)(in) = K(+)(out). The enzyme catalyses Ca(2+)(in) = Ca(2+)(out). In terms of biological role, forms serotonin (5-hydroxytryptamine/5-HT3)-activated cation-selective channel complexes, which when activated cause fast, depolarizing responses in neurons. This is 5-hydroxytryptamine receptor 3D from Homo sapiens (Human).